Here is a 461-residue protein sequence, read N- to C-terminus: MPMLKIYNSITRQKQEFKPITPGKVGMYVCGVTVYDLCHIGHGRTFVSFDMIVRYLRYAGYEVNFQRNITDIDDKIIKRANENQEDCNTLTDRLIGEMHKDFDALNMIRPDFEPRATLHIAEIIDMVERLLARGHAYVAADGDVLFSVASFPEYGRLSGQNLEQLQAGARVEVDDNKQNPMDFVLWKMSKPGEPTWESPWGPGRPGWHIECSAMNSKHLGLHFDIHGGGSDLQFPHHENEIAQSCCAHDTPYVNYWMHTGMVMVDREKMSKSLGNFFTIRDVLGHYDPETVRYFLLSGHYRSQINYSEENLKQARAALERLYTAIKDVDLTVAPAPAEEFVAKFKAAMDDDFNTPEAYSVLFDMVREINRLKTTDMAQASAMAVAMKQLADVLGLLHQAPDAFFKGEGSDDEVAEIEALIVERNRARAEKDWPAADVARNRLNELGVVLEDGPSGTTWRKK.

Cys-30 contacts Zn(2+). Residues 32–42 (VTVYDLCHIGH) carry the 'HIGH' region motif. Cys-211, His-236, and Glu-240 together coordinate Zn(2+). The short motif at 268 to 272 (KMSKS) is the 'KMSKS' region element. Lys-271 contacts ATP.

Belongs to the class-I aminoacyl-tRNA synthetase family. Monomer. Requires Zn(2+) as cofactor.

The protein localises to the cytoplasm. It catalyses the reaction tRNA(Cys) + L-cysteine + ATP = L-cysteinyl-tRNA(Cys) + AMP + diphosphate. This is Cysteine--tRNA ligase from Shewanella sp. (strain MR-7).